We begin with the raw amino-acid sequence, 334 residues long: S-adenosylmethionine:tRNA ribosyltransferase-isomerase (334 aa).

Belongs to the QueA family. In terms of assembly, monomer.

Its subcellular location is the cytoplasm. It carries out the reaction 7-aminomethyl-7-carbaguanosine(34) in tRNA + S-adenosyl-L-methionine = epoxyqueuosine(34) in tRNA + adenine + L-methionine + 2 H(+). It participates in tRNA modification; tRNA-queuosine biosynthesis. Its function is as follows. Transfers and isomerizes the ribose moiety from AdoMet to the 7-aminomethyl group of 7-deazaguanine (preQ1-tRNA) to give epoxyqueuosine (oQ-tRNA). The chain is S-adenosylmethionine:tRNA ribosyltransferase-isomerase from Aquifex aeolicus (strain VF5).